Here is a 380-residue protein sequence, read N- to C-terminus: Putative glutamate--cysteine ligase 2 (380 aa).

Belongs to the glutamate--cysteine ligase type 2 family. YbdK subfamily.

It carries out the reaction L-cysteine + L-glutamate + ATP = gamma-L-glutamyl-L-cysteine + ADP + phosphate + H(+). Its function is as follows. ATP-dependent carboxylate-amine ligase which exhibits weak glutamate--cysteine ligase activity. In Pseudomonas entomophila (strain L48), this protein is Putative glutamate--cysteine ligase 2.